Consider the following 915-residue polypeptide: Protein inturned (915 aa).

A disordered region spans residues 88 to 144 (NAKRQANSSNKSEAKLKKLTKILRRKRRPSQRKAEGKDSSQRPASILKNQAGQRPGV). Over residues 104–118 (KKLTKILRRKRRPSQ) the composition is skewed to basic residues. Residues 128–139 (QRPASILKNQAG) show a composition bias toward polar residues. The region spanning 165 to 253 (SVSSSSADRG…PMQVRLTLET (89 aa)) is the PDZ domain. The interval 688-738 (GIRGRRASPQRSQSDSGSEGHADGTPASVARRDSLGSGGSDGSLGSAGFLK) is disordered.

Belongs to the inturned family.

It is found in the cytoplasm. It localises to the cell surface. The protein resides in the cytoskeleton. Its subcellular location is the cilium basal body. Functionally, plays a key role in ciliogenesis and embryonic development. Regulator of cilia formation by controlling the organization of the apical actin cytoskeleton and the positioning of the basal bodies at the apical cell surface, which in turn is essential for the normal orientation of elongating ciliary microtubules. Plays a key role in definition of cell polarity via its role in ciliogenesis but not via conversion extension. Has an indirect effect on hedgehog signaling. The sequence is that of Protein inturned (intu) from Danio rerio (Zebrafish).